A 570-amino-acid chain; its full sequence is Protein mom-5 (570 aa).

The first 16 residues, 1–16 (MHRHILILFLFGCLSA), serve as a signal peptide directing secretion. Topologically, residues 17–230 (DQRLSSTSIS…FDGRVRRILR (214 aa)) are extracellular. The 117-residue stretch at 32–148 (STTRKCEHIT…FPVTDLCVGK (117 aa)) folds into the FZ domain. 5 disulfide bridges follow: Cys37-Cys98, Cys45-Cys91, Cys82-Cys119, Cys108-Cys145, and Cys112-Cys136. N-linked (GlcNAc...) asparagine glycosylation is present at Asn51. A glycan (N-linked (GlcNAc...) asparagine) is linked at Asn149. Residues 231-251 (IWTAAWSVACFVCSLFTLVTF) form a helical membrane-spanning segment. Residues 252-264 (LVDLSRFAYPVRP) lie on the Cytoplasmic side of the membrane. The helical transmembrane segment at 265–285 (ILYLAFCYLAISTVYMIGVVG) threads the bilayer. Residues 286 to 319 (EDGFACGTYGSTPTTLVTQGGENVGCSALAVVHY) are Extracellular-facing. The helical transmembrane segment at 320–340 (FFFMSSCAWWLVLCLAWFLAA) threads the bilayer. Residues 341–348 (NLKWGAES) are Cytoplasmic-facing. The helical transmembrane segment at 349–369 (IAALSPYFHAMCWGVPAVLSV) threads the bilayer. Residues 370-395 (TVLVTNSVDGDVFTGICSVGNLNPSA) lie on the Extracellular side of the membrane. A helical membrane pass occupies residues 396–416 (LVYFFFTPIVVSLALGAVLLV). Residues 417–449 (CGIWSMIRIRSYIKLQHADVERNISKLEKLMLR) are Cytoplasmic-facing. A helical membrane pass occupies residues 450–470 (IGAFAIMYSLPTAMNAAIMWY). At 471-515 (QAVNMPAWLEGWLHHRCVRLQDRELFGFTYPVDDCPMDPKVAAPE) the chain is on the extracellular side. Residues 516–536 (IIVFLLKYVSQLVVGITCAIW) traverse the membrane as a helical segment. The Cytoplasmic segment spans residues 537 to 570 (VVSSKTLSSYHKAYLALSSRSPTVPAHVDQVNMR).

Belongs to the G-protein coupled receptor Fz/Smo family.

The protein localises to the cell membrane. It is found in the early endosome. Functionally, receptor for Wnt proteins. Most frizzled receptors are coupled to the beta-catenin canonical signaling pathway, which leads to the activation of disheveled proteins, inhibition of gsk-3 kinase, nuclear accumulation of beta-catenin and activation of Wnt target genes. A second signaling pathway involving PKC and calcium fluxes has been seen for some family members, but it is not yet clear if it represents a distinct pathway or if it can be integrated in the canonical pathway, as pkc seems to be required for Wnt-mediated inactivation of gsk-3 kinase. Both pathways seem to involve interactions with G-proteins. Required in embryonic development for the correct positioning and orientation of the mitotic spindles and division planes in blastomere cells. During early embryonic cell divisions, directs the asymmetric positioning of transcription factors such as pop-1 and dsh-2 in daughter cells in order to determine cell fate specification. Acts redundantly with other Wnt receptors such as lin-17 to control vulval precursor cell specification and also the polarity of different cell types including distal tip cells, seam cells, AVG interneurons and P-cells and their descendants. Plays a role in the migration of cell types including distal tip cells and the QR neuroblast descendants, QR.p and QR.pa during larval development. Negatively regulates the unc-6/Netrin receptors unc-5 and unc-40 to control distal tip cell polarity and migration. Acts through ced-5/DOCK180 and ced-10/Rac to control both distal tip cell migration and the phagocytic clearance of apoptotic cell corpses. Furthermore, it is also required for the migration and axon guidance of the different neuronal cell types including CAN, ALM, HSN and the two mechanosensory neurons AVM and PVM. Mediates Wnt receptor cfz-2 in directing ALM migration, but may also act redundantly with the Wnt receptors cfz-2 and mig-1 to direct the migration of other neuronal cell types including CAN and HSN. Mediates Wnt ligand egl-20 in the control of the anterior-posterior axon guidance of AVM and PVM neurons. This chain is Protein mom-5, found in Caenorhabditis elegans.